The chain runs to 571 residues: Proline--tRNA ligase (571 aa).

It belongs to the class-II aminoacyl-tRNA synthetase family. ProS type 1 subfamily. Homodimer.

Its subcellular location is the cytoplasm. It catalyses the reaction tRNA(Pro) + L-proline + ATP = L-prolyl-tRNA(Pro) + AMP + diphosphate. Catalyzes the attachment of proline to tRNA(Pro) in a two-step reaction: proline is first activated by ATP to form Pro-AMP and then transferred to the acceptor end of tRNA(Pro). As ProRS can inadvertently accommodate and process non-cognate amino acids such as alanine and cysteine, to avoid such errors it has two additional distinct editing activities against alanine. One activity is designated as 'pretransfer' editing and involves the tRNA(Pro)-independent hydrolysis of activated Ala-AMP. The other activity is designated 'posttransfer' editing and involves deacylation of mischarged Ala-tRNA(Pro). The misacylated Cys-tRNA(Pro) is not edited by ProRS. The protein is Proline--tRNA ligase of Pseudomonas putida (strain ATCC 700007 / DSM 6899 / JCM 31910 / BCRC 17059 / LMG 24140 / F1).